An 851-amino-acid polypeptide reads, in one-letter code: DNA mismatch repair protein MutS (851 aa).

602–609 (GPNMSGKS) serves as a coordination point for ATP.

It belongs to the DNA mismatch repair MutS family.

In terms of biological role, this protein is involved in the repair of mismatches in DNA. It is possible that it carries out the mismatch recognition step. This protein has a weak ATPase activity. The sequence is that of DNA mismatch repair protein MutS from Streptococcus pyogenes serotype M49 (strain NZ131).